A 53-amino-acid polypeptide reads, in one-letter code: Light-harvesting protein B800/850/890 beta-1 chain (53 aa).

Over 1-19 (ADNMSLTGLSDEEAKEFHS) the chain is Cytoplasmic. A bacteriochlorophyll-binding residues include histidine 18 and histidine 36. The helical transmembrane segment at 20 to 42 (IFMQSFLIFTAVAVVAHFLAWAW) threads the bilayer. Residues 43 to 53 (RPWIPGAEGYG) are Periplasmic-facing.

It belongs to the antenna complex beta subunit family. The core complex is formed by different alpha and beta chains, binding bacteriochlorophyll molecules, and arranged most probably in tetrameric structures disposed around the reaction center. The non-pigmented gamma chains may constitute additional components.

The protein resides in the cell inner membrane. Antenna complexes are light-harvesting systems, which transfer the excitation energy to the reaction centers. This Halorhodospira halophila (strain DSM 244 / SL1) (Ectothiorhodospira halophila (strain DSM 244 / SL1)) protein is Light-harvesting protein B800/850/890 beta-1 chain.